The sequence spans 87 residues: DNA-directed RNA polymerase subunit omega (87 aa).

Belongs to the RNA polymerase subunit omega family. In terms of assembly, the RNAP catalytic core consists of 2 alpha, 1 beta, 1 beta' and 1 omega subunit. When a sigma factor is associated with the core the holoenzyme is formed, which can initiate transcription.

The enzyme catalyses RNA(n) + a ribonucleoside 5'-triphosphate = RNA(n+1) + diphosphate. Functionally, promotes RNA polymerase assembly. Latches the N- and C-terminal regions of the beta' subunit thereby facilitating its interaction with the beta and alpha subunits. The protein is DNA-directed RNA polymerase subunit omega of Pseudomonas syringae pv. syringae (strain B728a).